Here is a 1350-residue protein sequence, read N- to C-terminus: Nicotinate hydroxylase hnxS (1350 aa).

6 residues coordinate [2Fe-2S] cluster: C49, C54, C89, C92, C133, and C135. The disordered stretch occupies residues 164-193; the sequence is LVGTEEETESDMGAHSGSGDTGSRSSGSCG. Positions 180–192 are enriched in low complexity; the sequence is GSGDTGSRSSGSC. An FAD-binding PCMH-type domain is found at 256–445; sequence YGDAEQAWVK…TKIAVPMPSK (190 aa). FAD is bound by residues 284–291, 379–383, D392, and K455; these read LVTGASEV and CLAGN. Residues Q793 and F824 each coordinate Mo-molybdopterin. Substrate is bound by residues E828 and R906. Positions 938 and 1107 each coordinate Mo-molybdopterin. E1281 acts as the Proton acceptor in catalysis.

The protein belongs to the xanthine dehydrogenase family. [2Fe-2S] cluster serves as cofactor. FAD is required as a cofactor. It depends on Mo-molybdopterin as a cofactor.

Its activity is regulated as follows. Allopurinol inhibits catalytic activity in a linear fashion. Nicotinate hydroxylase, part of the hnx cluster involved in the purine degradation. The nicotinate hydroxylase hnxS accepts nicotinate as a substrate and catalyzes the first step of nicotinate catabolism. HnxS also accepts hypoxanthine, but not xanthine, as a substrate. The major facilitator-type transporters hxnP and hxnZ are probably involved in the uptake of nicotinate-derived metabolites, and the oxidoreductases hxnT and hxnY in the further metabolism of 6-OH nicotinic acid. The chain is Nicotinate hydroxylase hnxS from Emericella nidulans (strain FGSC A4 / ATCC 38163 / CBS 112.46 / NRRL 194 / M139) (Aspergillus nidulans).